The sequence spans 427 residues: MNFSRSADLFKQAQNSIPGGVNSPVRAFKSVGRDPLFIKKASGCKIEDVDGNQFIDFVGSWGPMILGHCHPQVASAVKAAVDSGCSFGAPTELEITLAEMVINAVPSIEMVRMVSSGTEATMSAIRLARGYTGRDKILKFSGCYHGHSDSLLVKAGSGAATFGVPDSPGVPQDFARHTLTADYNSLESVRTLIAENKGQVACIIVEPVAGNMGTVPPREGFLEGLRTLCTQEGIVLIFDEVMSGFRVAYGGAQEVYGVTPDMTTLGKIIGGGLPVGAFGGKKEIMTLLSPSGGVYQAGTLSGNPLAMTAGIETLKLLQAEGFYRNLEEKSSYVAAGIARAAEKAGFPIYSARVGSMFCAFFSKDPVYDWTTAAKCDTEAFAKYFRLMLGEGIYLAPSQYETAFVSIAHATEDLDRTIAAAEKSFRAL.

Position 267 is an N6-(pyridoxal phosphate)lysine (Lys-267).

Belongs to the class-III pyridoxal-phosphate-dependent aminotransferase family. HemL subfamily. As to quaternary structure, homodimer. Requires pyridoxal 5'-phosphate as cofactor.

The protein localises to the cytoplasm. The enzyme catalyses (S)-4-amino-5-oxopentanoate = 5-aminolevulinate. It participates in porphyrin-containing compound metabolism; protoporphyrin-IX biosynthesis; 5-aminolevulinate from L-glutamyl-tRNA(Glu): step 2/2. The polypeptide is Glutamate-1-semialdehyde 2,1-aminomutase (Geotalea daltonii (strain DSM 22248 / JCM 15807 / FRC-32) (Geobacter daltonii)).